The following is a 128-amino-acid chain: Small ribosomal subunit protein uS11 (128 aa).

This sequence belongs to the universal ribosomal protein uS11 family. In terms of assembly, part of the 30S ribosomal subunit. Interacts with proteins S7 and S18. Binds to IF-3.

Located on the platform of the 30S subunit, it bridges several disparate RNA helices of the 16S rRNA. Forms part of the Shine-Dalgarno cleft in the 70S ribosome. The sequence is that of Small ribosomal subunit protein uS11 from Desulfatibacillum aliphaticivorans.